The primary structure comprises 244 residues: Capsid protein (244 aa).

Residues 1 to 24 carry the Bipartite nuclear localization signal motif; the sequence is MSTSKRKRGDDANWSKRVTKKKPS. A disordered region spans residues 1–39; the sequence is MSTSKRKRGDDANWSKRVTKKKPSSAGLKRAGSKADRPS.

It belongs to the geminiviridae capsid protein family. Homomultimer. Interacts with the movement protein. Binds to single-stranded and double-stranded viral DNA.

Its subcellular location is the virion. It is found in the host nucleus. Encapsidates the viral genome into characteristic twinned ('geminate') particles. Binds the genomic viral ssDNA and shuttles it into and out of the cell nucleus. Plays a role in protection of the genome from degradation, virus acquisition and transmission by insect vectors, infectivity, and systemic movement. The CP of monopartite geminiviruses is absolutely essential for virus movement. The chain is Capsid protein from Maize streak virus genotype A (isolate Kenya) (MSV).